The following is a 452-amino-acid chain: UPF0210 protein Cthe_0410 (452 aa).

This sequence belongs to the UPF0210 family. As to quaternary structure, homodimer.

The sequence is that of UPF0210 protein Cthe_0410 from Acetivibrio thermocellus (strain ATCC 27405 / DSM 1237 / JCM 9322 / NBRC 103400 / NCIMB 10682 / NRRL B-4536 / VPI 7372) (Clostridium thermocellum).